A 427-amino-acid chain; its full sequence is UPF0229 protein KPN78578_11640 (427 aa).

A disordered region spans residues 72–109 (RNRVHPGNDHFVQNDRIERPQGGGGGGGSGQGQASADG). Basic and acidic residues predominate over residues 77–90 (PGNDHFVQNDRIER). Positions 92 to 102 (QGGGGGGGSGQ) are enriched in gly residues.

This sequence belongs to the UPF0229 family.

This chain is UPF0229 protein KPN78578_11640, found in Klebsiella pneumoniae subsp. pneumoniae (strain ATCC 700721 / MGH 78578).